The chain runs to 213 residues: Dimethylamine corrinoid protein 1 (213 aa).

The region spanning 1–90 (MSKEELLQEL…LMPEGSASSK (90 aa)) is the B12-binding N-terminal domain. A B12-binding domain is found at 91 to 213 (MGVIVNGTVE…AVAKAKELLA (123 aa)). A methylcob(III)alamin-binding site is contributed by His-104.

It belongs to the methylamine corrinoid protein family.

The protein operates within one-carbon metabolism; methanogenesis from dimethylamine. Its function is as follows. Acts as a methyl group carrier between MtbB and MtbA. In Methanosarcina acetivorans (strain ATCC 35395 / DSM 2834 / JCM 12185 / C2A), this protein is Dimethylamine corrinoid protein 1 (mtbC1).